A 96-amino-acid chain; its full sequence is Large ribosomal subunit protein bL21 (96 aa).

The protein belongs to the bacterial ribosomal protein bL21 family. As to quaternary structure, part of the 50S ribosomal subunit. Contacts protein L20.

Functionally, this protein binds to 23S rRNA in the presence of protein L20. In Prosthecochloris aestuarii (strain DSM 271 / SK 413), this protein is Large ribosomal subunit protein bL21.